The primary structure comprises 88 residues: Small ribosomal subunit protein bS20 (88 aa).

Residues 1–25 (MANSAQARKRARQATKARAHNASLR) are disordered. The segment covering 7 to 19 (ARKRARQATKARA) has biased composition (basic residues).

It belongs to the bacterial ribosomal protein bS20 family.

Its function is as follows. Binds directly to 16S ribosomal RNA. The protein is Small ribosomal subunit protein bS20 of Azoarcus sp. (strain BH72).